We begin with the raw amino-acid sequence, 63 residues long: Hirudin-P6 (63 aa).

The interval 1 to 3 (MRY) is interaction with thrombin active site. Intrachain disulfides connect Cys6/Cys14, Cys16/Cys28, and Cys22/Cys37. The segment covering 35–55 (KKCVEGEGTRKPQNEGQHDFD) has biased composition (basic and acidic residues). The disordered stretch occupies residues 35–63 (KKCVEGEGTRKPQNEGQHDFDPIPEEYLS). O-linked (GalNAc...) threonine glycosylation is present at Thr43. The segment at 53 to 63 (DFDPIPEEYLS) is interaction with fibrinogen-binding exosite of thrombin. Tyr61 carries the sulfotyrosine modification.

This sequence belongs to the protease inhibitor I14 (hirudin) family. O-linked glycan consists of Fuc-Gal-GalNAc trisaccharide.

It localises to the secreted. Functionally, hirudin is a potent thrombin-specific protease inhibitor. It forms a stable non-covalent complex with alpha-thrombin, thereby abolishing its ability to cleave fibrinogen. The chain is Hirudin-P6 from Hirudinaria manillensis (Asian medical leech).